Reading from the N-terminus, the 311-residue chain is Ribosomal RNA small subunit methyltransferase H (311 aa).

S-adenosyl-L-methionine is bound by residues 33–35 (AGH), aspartate 53, phenylalanine 80, aspartate 101, and glutamine 108.

This sequence belongs to the methyltransferase superfamily. RsmH family.

It localises to the cytoplasm. It catalyses the reaction cytidine(1402) in 16S rRNA + S-adenosyl-L-methionine = N(4)-methylcytidine(1402) in 16S rRNA + S-adenosyl-L-homocysteine + H(+). Functionally, specifically methylates the N4 position of cytidine in position 1402 (C1402) of 16S rRNA. The polypeptide is Ribosomal RNA small subunit methyltransferase H (Clostridioides difficile (strain 630) (Peptoclostridium difficile)).